The primary structure comprises 1059 residues: Ubiquitin carboxyl-terminal hydrolase 36 (1059 aa).

Disordered regions lie at residues 24–49 and 94–148; these read VGNG…DSEM and SNNN…KPKR. Over residues 94-123 the composition is skewed to low complexity; sequence SNNNNSSSCNGSNFGNSKVVGANGHDNGNN. The segment covering 130–139 has biased composition (polar residues); sequence QSESTQSGPS. In terms of domain architecture, USP spans 171–479; that stretch reads TGMINVGNTC…NAYIMFYELD (309 aa). Residue Cys180 is the Nucleophile of the active site. Catalysis depends on His438, which acts as the Proton acceptor. The interval 505–673 is disordered; that stretch reads TVSSSSPTHT…KTPLKSSVKT (169 aa). Phosphoserine occurs at positions 508 and 510. Residues 528 to 539 show a composition bias toward polar residues; that stretch reads GYSNGHATGSSN. Composition is skewed to low complexity over residues 540–560, 592–611, and 633–647; these read AQKT…NGLQ, NGNK…KSVN, and ATAT…RPTA. A compositionally biased stretch (basic and acidic residues) spans 655–664; sequence MTEDSSDKPK. Phosphothreonine is present on residues Thr673 and Thr682. 3 disordered regions span residues 687–893, 926–998, and 1012–1059; these read LVPY…EAST, KELV…RYHN, and KYNR…QSSS. A phosphoserine mark is found at Ser692 and Ser694. Composition is skewed to low complexity over residues 729–739 and 752–765; these read TKTNGGSLTNG and SSSS…ASAA. Ser766 carries the post-translational modification Phosphoserine. A compositionally biased stretch (acidic residues) spans 766–776; that stretch reads SDDEDADEEEE. Over residues 779–795 the composition is skewed to polar residues; sequence KLTNGWQPQKQSQSLTQ. Positions 799–808 are enriched in pro residues; the sequence is PPSPKTPPSP. The residue at position 801 (Ser801) is a Phosphoserine. At Thr804 the chain carries Phosphothreonine. Ser807 bears the Phosphoserine mark. Positions 825–839 are enriched in acidic residues; sequence DNEDEDDDDDEDEEE. Composition is skewed to polar residues over residues 842–862 and 876–893; these read QVVS…STTP and KSQQ…EAST. A phosphothreonine mark is found at Thr846 and Thr861. Residues 926–940 are compositionally biased toward basic and acidic residues; it reads KELVAEAREQRQHDH. Positions 1048–1059 are enriched in low complexity; the sequence is QQQQQQSQQSSS.

This sequence belongs to the peptidase C19 family. As to quaternary structure, interacts with atms/PAF1, but not with CycT.

The protein localises to the nucleus. The protein resides in the nucleolus. It carries out the reaction Thiol-dependent hydrolysis of ester, thioester, amide, peptide and isopeptide bonds formed by the C-terminal Gly of ubiquitin (a 76-residue protein attached to proteins as an intracellular targeting signal).. Required for maintaining multiple types of adult stem cells, including male and female germline, epithelial follicle cell and intestinal stem cells. May function as a transcriptional repressor by continually deubiquiting histone H2B at the promoters of genes critical for cellular differentiation, thereby preventing histone H3 'Lys-4' trimethylation (H3K4). Controls selective autophagy activation by ubiquitinated proteins. The protein is Ubiquitin carboxyl-terminal hydrolase 36 (Usp36) of Drosophila pseudoobscura pseudoobscura (Fruit fly).